A 904-amino-acid polypeptide reads, in one-letter code: Eukaryotic translation initiation factor 3 subunit C (904 aa).

Disordered regions lie at residues 1-38 (MSRF…EEED) and 156-290 (FRES…TSEK). Polar residues predominate over residues 22-32 (IQRQTAPQFTF). Over residues 161 to 183 (DAADDEDEEEEKKEEEESDDEEA) the composition is skewed to acidic residues. Basic and acidic residues predominate over residues 194–206 (FKKDTVEKVKVEK). Acidic residues predominate over residues 207–232 (DDDDSDDSIDWGQDSDSDESSSEEEA). Over residues 237 to 247 (IRERFLKRPEK) the composition is skewed to basic and acidic residues. Over residues 257–272 (KEKKKTKETKDSRKKK) the composition is skewed to basic residues. A PCI domain is found at 636–812 (FHMHINLELL…ETVVLHRSEP (177 aa)). A disordered region spans residues 847–904 (RGGNQGYNRDRQNYRNQNQNRENWNNNRRQDRGNRNRNQNRDREQREQHRVEFEEKAE). The segment covering 860–873 (YRNQNQNRENWNNN) has biased composition (low complexity). Residues 874–904 (RRQDRGNRNRNQNRDREQREQHRVEFEEKAE) show a composition bias toward basic and acidic residues.

It belongs to the eIF-3 subunit C family. As to quaternary structure, component of the eukaryotic translation initiation factor 3 (eIF-3) complex.

It localises to the cytoplasm. Component of the eukaryotic translation initiation factor 3 (eIF-3) complex, which is involved in protein synthesis of a specialized repertoire of mRNAs and, together with other initiation factors, stimulates binding of mRNA and methionyl-tRNAi to the 40S ribosome. The eIF-3 complex specifically targets and initiates translation of a subset of mRNAs involved in cell proliferation. This Culex quinquefasciatus (Southern house mosquito) protein is Eukaryotic translation initiation factor 3 subunit C.